The sequence spans 549 residues: Membrane protein insertase YidC (549 aa).

A helical transmembrane segment spans residues 6–26 (NLLLIGLLLVSFMLWQSWMVD). Residues 35-55 (ATAESSVPASSGGDVPNQNDA) form a disordered region. A run of 4 helical transmembrane segments spans residues 349 to 369 (QFLH…TMIV), 424 to 444 (LGGC…YWTL), 462 to 482 (LSVK…MWYI), and 503 to 523 (PIVF…YWVV).

It belongs to the OXA1/ALB3/YidC family. Type 1 subfamily. Interacts with the Sec translocase complex via SecD. Specifically interacts with transmembrane segments of nascent integral membrane proteins during membrane integration.

Its subcellular location is the cell inner membrane. Its function is as follows. Required for the insertion and/or proper folding and/or complex formation of integral membrane proteins into the membrane. Involved in integration of membrane proteins that insert both dependently and independently of the Sec translocase complex, as well as at least some lipoproteins. Aids folding of multispanning membrane proteins. This Tolumonas auensis (strain DSM 9187 / NBRC 110442 / TA 4) protein is Membrane protein insertase YidC.